A 134-amino-acid polypeptide reads, in one-letter code: MTEQIESMELAAVAHIKATKNDTFVHITDMTGSETIAKITGGMRVKAQRDEGSPYAAMLAAQDVATKILGRGVKVLHFKLRGAGGVKPMALGPGAQTAIRTLIRAGLRVGRIEDVTPVARDRVRKRGGHRGRRV.

The protein belongs to the universal ribosomal protein uS11 family. Component of the small ribosomal subunit.

The protein localises to the cytoplasm. In Encephalitozoon cuniculi (strain GB-M1) (Microsporidian parasite), this protein is Small ribosomal subunit protein uS11 (RPS14).